The sequence spans 729 residues: Polyribonucleotide nucleotidyltransferase (729 aa).

The Mg(2+) site is built by Asp-509 and Asp-515. The KH domain occupies 575–634; it reads PRVISVKIPVDKIGEVIGPKGKMINQIQADSGAEITVEDDGTIYIGAVDGPSAESARSAI. The region spanning 646-718 is the S1 motif domain; the sequence is GERYLGTIVK…SRGKISLSPS (73 aa).

Belongs to the polyribonucleotide nucleotidyltransferase family. It depends on Mg(2+) as a cofactor.

It localises to the cytoplasm. It carries out the reaction RNA(n+1) + phosphate = RNA(n) + a ribonucleoside 5'-diphosphate. Functionally, involved in mRNA degradation. Catalyzes the phosphorolysis of single-stranded polyribonucleotides processively in the 3'- to 5'-direction. In Frankia casuarinae (strain DSM 45818 / CECT 9043 / HFP020203 / CcI3), this protein is Polyribonucleotide nucleotidyltransferase.